The sequence spans 359 residues: Bergaptol O-methyltransferase (359 aa).

H126 contributes to the bergaptol binding site. S179, G203, D226, D246, and K260 together coordinate S-adenosyl-L-homocysteine. H264 contacts bergaptol. H264 functions as the Proton acceptor in the catalytic mechanism.

It belongs to the class I-like SAM-binding methyltransferase superfamily. Cation-independent O-methyltransferase family. COMT subfamily.

It catalyses the reaction a 5-hydroxyfurocoumarin + S-adenosyl-L-methionine = a 5-methoxyfurocoumarin + S-adenosyl-L-homocysteine + H(+). The enzyme catalyses bergaptol + S-adenosyl-L-methionine = bergapten + S-adenosyl-L-homocysteine. Inhibited by Cu(2+), Ni(2+) and Co(2+). This is Bergaptol O-methyltransferase from Glehnia littoralis (Beach silvertop).